The chain runs to 526 residues: Cytochrome P450 52A5 (526 aa).

The chain crosses the membrane as a helical span at residues 18–38 (WYVIVPLAIIIYKVFDYFYVL). C473 is a heme binding site.

Belongs to the cytochrome P450 family. It depends on heme as a cofactor.

The protein resides in the membrane. Together with an NADPH cytochrome P450 the enzyme system catalyzes the terminal hydroxylation as the first step in the assimilation of alkanes and fatty acids. This is Cytochrome P450 52A5 (CYP52A5) from Candida maltosa (Yeast).